We begin with the raw amino-acid sequence, 1526 residues long: Myosin type-2 heavy chain 1 (1526 aa).

The 52-residue stretch at 22 to 73 (DDKRWVWISDPETAFTKAWIKEDLPDKKYVVRYNNSRDEKIVGEDEIDPVNP) folds into the Myosin N-terminal SH3-like domain. In terms of domain architecture, Myosin motor spans 77 to 755 (DRVNDMAELT…VLAELEERRV (679 aa)). Residue 170-177 (GESGAGKT) coordinates ATP. Actin-binding regions lie at residues 634-656 (LNQLMNQFNSTQPHFIRCIVPNE) and 734-748 (RIGVSKIFFKAGVLA). The IQ domain maps to 758 to 787 (LQRLMTMLQTRIRGFLQRKIFQKRLKDIQA). Residues 875 to 1244 (ALDKEEILRR…SLTKQVNELS (370 aa)) are a coiled coil. Ser-1044 bears the Phosphoserine mark.

The protein belongs to the TRAFAC class myosin-kinesin ATPase superfamily. Myosin family. As to quaternary structure, binds to cdc4 and rlc1.

In terms of biological role, required for cell division. It is a component of the cdc12 'spot', a structure thought to mark the site of septation. May work in conjunction with myo3. The protein is Myosin type-2 heavy chain 1 (myo2) of Schizosaccharomyces pombe (strain 972 / ATCC 24843) (Fission yeast).